Reading from the N-terminus, the 280-residue chain is 4-hydroxy-3-methylbut-2-enyl diphosphate reductase (280 aa).

Cys12 lines the [4Fe-4S] cluster pocket. Positions 40 and 72 each coordinate (2E)-4-hydroxy-3-methylbut-2-enyl diphosphate. Dimethylallyl diphosphate-binding residues include His40 and His72. The isopentenyl diphosphate site is built by His40 and His72. Cys94 is a [4Fe-4S] cluster binding site. His122 is a (2E)-4-hydroxy-3-methylbut-2-enyl diphosphate binding site. His122 serves as a coordination point for dimethylallyl diphosphate. Residue His122 coordinates isopentenyl diphosphate. Catalysis depends on Glu124, which acts as the Proton donor. Thr160 is a (2E)-4-hydroxy-3-methylbut-2-enyl diphosphate binding site. Cys188 is a [4Fe-4S] cluster binding site. 3 residues coordinate (2E)-4-hydroxy-3-methylbut-2-enyl diphosphate: Ser216, Asn218, and Ser260. Ser216, Asn218, and Ser260 together coordinate dimethylallyl diphosphate. Residues Ser216, Asn218, and Ser260 each contribute to the isopentenyl diphosphate site.

It belongs to the IspH family. It depends on [4Fe-4S] cluster as a cofactor.

It catalyses the reaction isopentenyl diphosphate + 2 oxidized [2Fe-2S]-[ferredoxin] + H2O = (2E)-4-hydroxy-3-methylbut-2-enyl diphosphate + 2 reduced [2Fe-2S]-[ferredoxin] + 2 H(+). The enzyme catalyses dimethylallyl diphosphate + 2 oxidized [2Fe-2S]-[ferredoxin] + H2O = (2E)-4-hydroxy-3-methylbut-2-enyl diphosphate + 2 reduced [2Fe-2S]-[ferredoxin] + 2 H(+). Its pathway is isoprenoid biosynthesis; dimethylallyl diphosphate biosynthesis; dimethylallyl diphosphate from (2E)-4-hydroxy-3-methylbutenyl diphosphate: step 1/1. It functions in the pathway isoprenoid biosynthesis; isopentenyl diphosphate biosynthesis via DXP pathway; isopentenyl diphosphate from 1-deoxy-D-xylulose 5-phosphate: step 6/6. Catalyzes the conversion of 1-hydroxy-2-methyl-2-(E)-butenyl 4-diphosphate (HMBPP) into a mixture of isopentenyl diphosphate (IPP) and dimethylallyl diphosphate (DMAPP). Acts in the terminal step of the DOXP/MEP pathway for isoprenoid precursor biosynthesis. The protein is 4-hydroxy-3-methylbut-2-enyl diphosphate reductase of Trichlorobacter lovleyi (strain ATCC BAA-1151 / DSM 17278 / SZ) (Geobacter lovleyi).